Reading from the N-terminus, the 401-residue chain is Dual specificity mitogen-activated protein kinase kinase 2 (401 aa).

Methionine 1 carries the N-acetylmethionine modification. Serine 23 carries the post-translational modification Phosphoserine. Residues 72–370 (FERISELGAG…LKLLMNHAFI (299 aa)) enclose the Protein kinase domain. Residues 78 to 86 (LGAGNGGVV) and lysine 101 each bind ATP. Aspartate 194 (proton acceptor) is an active-site residue. Residues serine 222 and serine 226 each carry the phosphoserine; by RAF modification. The interval 282 to 310 (PVVDGADGEPHSVSPRPRPPGRPISVGHG) is disordered. 3 positions are modified to phosphoserine: serine 293, serine 295, and serine 306. Phosphothreonine occurs at positions 395 and 397.

Belongs to the protein kinase superfamily. STE Ser/Thr protein kinase family. MAP kinase kinase subfamily. Interacts with MORG1. Interacts with SGK1. Interacts with KSR1. Interacts with KSR1 and BRAF; the interaction with KSR1 mediates KSR1-BRAF dimerization. Interacts with GLS. Mg(2+) serves as cofactor. In terms of processing, phosphorylation on Ser/Thr by MAP kinase kinase kinases (RAF or MEKK1) positively regulates the kinase activity. Phosphorylated by MAP2K1/MEK1. Low levels of autophosphorylation have been observed. Expressed in adult intestine, kidney, liver, lung, pancreas, spleen, thymus, and at high levels in the neonatal brain. Lower expression is found in adult brain and heart.

The protein resides in the cytoplasm. Its subcellular location is the membrane. It carries out the reaction L-seryl-[protein] + ATP = O-phospho-L-seryl-[protein] + ADP + H(+). The catalysed reaction is L-threonyl-[protein] + ATP = O-phospho-L-threonyl-[protein] + ADP + H(+). It catalyses the reaction L-tyrosyl-[protein] + ATP = O-phospho-L-tyrosyl-[protein] + ADP + H(+). Inhibited by serine/threonine phosphatase 2A. Functionally, catalyzes the concomitant phosphorylation of a threonine and a tyrosine residue in a Thr-Glu-Tyr sequence located in MAP kinases. Activates the ERK1 and ERK2 MAP kinases. Activates BRAF in a KSR1 or KSR2-dependent manner; by binding to KSR1 or KSR2 releases the inhibitory intramolecular interaction between KSR1 or KSR2 protein kinase and N-terminal domains which promotes KSR1 or KSR2-BRAF dimerization and BRAF activation. The protein is Dual specificity mitogen-activated protein kinase kinase 2 (Map2k2) of Mus musculus (Mouse).